The sequence spans 336 residues: Holliday junction branch migration complex subunit RuvB (336 aa).

The large ATPase domain (RuvB-L) stretch occupies residues 4–185 (ADRLISADIQ…FGIVQRLEFY (182 aa)). ATP contacts are provided by residues isoleucine 24, arginine 25, glycine 66, lysine 69, threonine 70, threonine 71, 132–134 (EDY), arginine 175, tyrosine 185, and arginine 222. Threonine 70 is a Mg(2+) binding site. The small ATPAse domain (RuvB-S) stretch occupies residues 186-256 (NVDDLQHIVA…IASKALDMLN (71 aa)). Residues 259-336 (AAGFDYLDRK…RHFNRIMEAP (78 aa)) are head domain (RuvB-H). DNA-binding residues include arginine 295, arginine 314, and arginine 319.

It belongs to the RuvB family. In terms of assembly, homohexamer. Forms an RuvA(8)-RuvB(12)-Holliday junction (HJ) complex. HJ DNA is sandwiched between 2 RuvA tetramers; dsDNA enters through RuvA and exits via RuvB. An RuvB hexamer assembles on each DNA strand where it exits the tetramer. Each RuvB hexamer is contacted by two RuvA subunits (via domain III) on 2 adjacent RuvB subunits; this complex drives branch migration. In the full resolvosome a probable DNA-RuvA(4)-RuvB(12)-RuvC(2) complex forms which resolves the HJ.

The protein resides in the cytoplasm. It catalyses the reaction ATP + H2O = ADP + phosphate + H(+). Functionally, the RuvA-RuvB-RuvC complex processes Holliday junction (HJ) DNA during genetic recombination and DNA repair, while the RuvA-RuvB complex plays an important role in the rescue of blocked DNA replication forks via replication fork reversal (RFR). RuvA specifically binds to HJ cruciform DNA, conferring on it an open structure. The RuvB hexamer acts as an ATP-dependent pump, pulling dsDNA into and through the RuvAB complex. RuvB forms 2 homohexamers on either side of HJ DNA bound by 1 or 2 RuvA tetramers; 4 subunits per hexamer contact DNA at a time. Coordinated motions by a converter formed by DNA-disengaged RuvB subunits stimulates ATP hydrolysis and nucleotide exchange. Immobilization of the converter enables RuvB to convert the ATP-contained energy into a lever motion, pulling 2 nucleotides of DNA out of the RuvA tetramer per ATP hydrolyzed, thus driving DNA branch migration. The RuvB motors rotate together with the DNA substrate, which together with the progressing nucleotide cycle form the mechanistic basis for DNA recombination by continuous HJ branch migration. Branch migration allows RuvC to scan DNA until it finds its consensus sequence, where it cleaves and resolves cruciform DNA. The polypeptide is Holliday junction branch migration complex subunit RuvB (Proteus mirabilis (strain HI4320)).